A 2242-amino-acid chain; its full sequence is Large tegument protein deneddylase (2242 aa).

The segment at 1 to 238 (MKVTQASCHQ…IDLTGVVRES (238 aa)) is deubiquitination activity. The 223-residue stretch at 4–226 (TQASCHQGDI…AARLVSTYRD (223 aa)) folds into the Peptidase C76 domain. Active-site residues include Cys24, Asp160, and His162. Positions 239–318 (ADTAATTTTA…KTLATASSSS (80 aa)) are disordered. Residues 240–250 (DTAATTTTAAP) are compositionally biased toward low complexity. Residues 251–268 (SLPPLPDPIVDPGCPPGV) are compositionally biased toward pro residues. Positions 304 to 318 (PSTTSKTLATASSSS) are enriched in low complexity. The tract at residues 328 to 332 (SSAVP) is interaction with inner tegument protein. Residues 1173–1190 (SQQKMEGQLQETRQQMTE) show a composition bias toward polar residues. The segment at 1173–1229 (SQQKMEGQLQETRQQMTETSERLDRSLRQDPGSSSVTRVPEKPFKGQELAGRITPPP) is disordered. Basic and acidic residues predominate over residues 1191-1200 (TSERLDRSLR).

Belongs to the herpesviridae large tegument protein family. Interacts with host CUL1 and CUL4A; these interactions inhibit the E3 ligase activity of cullins. Interacts with inner tegument protein. Interacts with capsid vertex specific component CVC2. Interacts with the major capsid protein/MCP.

The protein resides in the virion tegument. Its subcellular location is the host cytoplasm. It is found in the host nucleus. It carries out the reaction Thiol-dependent hydrolysis of ester, thioester, amide, peptide and isopeptide bonds formed by the C-terminal Gly of ubiquitin (a 76-residue protein attached to proteins as an intracellular targeting signal).. Functionally, large tegument protein that plays multiple roles in the viral cycle. During viral entry, remains associated with the capsid while most of the tegument is detached and participates in the capsid transport toward the host nucleus. Plays a role in the routing of the capsid at the nuclear pore complex and subsequent uncoating. Within the host nucleus, acts as a deneddylase and promotes the degradation of nuclear CRLs (cullin-RING ubiquitin ligases) and thereby stabilizes nuclear CRL substrates, while cytoplasmic CRLs remain unaffected. These modifications prevent host cell cycle S-phase progression and create a favorable environment allowing efficient viral genome replication. Participates later in the secondary envelopment of capsids. Indeed, plays a linker role for the association of the outer viral tegument to the capsids together with the inner tegument protein. The polypeptide is Large tegument protein deneddylase (Homo sapiens (Human)).